Here is a 970-residue protein sequence, read N- to C-terminus: Unconventional myosin-XIX (970 aa).

Residues 35–758 (YKLDDLTRVN…MLELLECGRA (724 aa)) form the Myosin motor domain. 132-139 (GESGAGKT) serves as a coordination point for ATP. Positions 602–624 (LEQLLQVLHSTTPHYIRCIKPNS) are actin-binding. Ser-685 carries the phosphoserine modification. IQ domains lie at 759–779 (RVLEQCARCIQGGWRRHRHRE) and 783–812 (QWRAVMLIQAAIRSWLTRKHIQRLHAAATV). The myMOMA region stretch occupies residues 824-970 (MACLAAKELD…VTSSAFTGLG (147 aa)).

It belongs to the TRAFAC class myosin-kinesin ATPase superfamily. Myosin family. In terms of assembly, myosin is a hexamer of 2 heavy chains and 4 light chains: interacts with myosin light chains MYL9 and MYL12B. Widely expressed in multiple tissues and cell lines.

It is found in the mitochondrion outer membrane. The protein resides in the cytoplasm. The protein localises to the cytoskeleton. In terms of biological role, actin-based motor molecule with ATPase activity that localizes to the mitochondrion outer membrane. Motor protein that moves towards the plus-end of actin filaments. Required for mitochondrial inheritance during mitosis. May be involved in mitochondrial transport or positioning. The sequence is that of Unconventional myosin-XIX from Homo sapiens (Human).